We begin with the raw amino-acid sequence, 454 residues long: DNA-binding protein BIN4 (454 aa).

Disordered stretches follow at residues Leu24–Asp53, Ala103–Thr249, and Thr380–Lys454. The segment covering Asp112–Ala123 has biased composition (basic and acidic residues). Residues Leu132–Ser150 are compositionally biased toward polar residues. The segment covering Thr229–Thr249 has biased composition (basic and acidic residues). Basic residues predominate over residues Pro438 to Lys454.

Interacts with TOP6A, RHL1 and itself, but not with TOP6B. As to expression, expressed in expanding cotyledons, vascular cells, elongating root cells, developing leaf trichomes, root and apical meristems and lateral root primordia.

The protein localises to the nucleus. Component of the DNA topoisomerase VI complex. Binds to DNA. Required for chromatin organization and progression of endoreduplication cycles. The loss of BIN4 activates the ATM- and ATR-dependent DNA damage responses in postmitotic cells and induces the ectopic expression of the mitotic G2/M-specific cyclin B1;1 gene in non-dividing cells. The protein is DNA-binding protein BIN4 (BIN4) of Arabidopsis thaliana (Mouse-ear cress).